We begin with the raw amino-acid sequence, 469 residues long: tRNA modification GTPase MnmE (469 aa).

(6S)-5-formyl-5,6,7,8-tetrahydrofolate contacts are provided by Arg38, Glu95, and Arg134. The 163-residue stretch at Gly230 to Asp392 folds into the TrmE-type G domain. Residues Asn240 to Ser245, Ser259 to Thr265, and Asp284 to Gly287 contribute to the GTP site. The Mg(2+) site is built by Ser244 and Thr265. Residue Lys468 coordinates (6S)-5-formyl-5,6,7,8-tetrahydrofolate.

The protein belongs to the TRAFAC class TrmE-Era-EngA-EngB-Septin-like GTPase superfamily. TrmE GTPase family. In terms of assembly, homodimer. Heterotetramer of two MnmE and two MnmG subunits. It depends on K(+) as a cofactor.

The protein resides in the cytoplasm. Its function is as follows. Exhibits a very high intrinsic GTPase hydrolysis rate. Involved in the addition of a carboxymethylaminomethyl (cmnm) group at the wobble position (U34) of certain tRNAs, forming tRNA-cmnm(5)s(2)U34. This Halorhodospira halophila (strain DSM 244 / SL1) (Ectothiorhodospira halophila (strain DSM 244 / SL1)) protein is tRNA modification GTPase MnmE.